Reading from the N-terminus, the 425-residue chain is MNTVNTRKKFFPNVTDEEWNDWTWQVKNRLESVEDLKKYVDLSEEETEGVVRTLETLRMAITPYYFSLIDLNSDRCPIRKQAIPTIQEIHQSDADLLDPLHEDEDSPVPGLTHRYPDRVLLLITDMCSMYCRHCTRRRFAGSSDDAMPMDRIDKAIEYIAKTPQVRDVLLSGGDALLVSDKKLESIIQKLRAIPHVEIIRIGSRTPVVLPQRITPELCNMLKKYHPIWLNTHFNHPQEVTPEAKKACEMLADAGVPLGNQTVLLRGINDSVPVMKRLVHDLVMMRVRPYYIYQCDLSMGLEHFRTPVSKGIEIIEGLRGHTSGYAVPTFVVDAPGGGGKTPVMPQYVISQSPHRVVLRNFEGVITTYTEPENYTHEPCYDEEKFEKMYEISGVYMLDEGLKMSLEPSHLARHERNKKRAEAEGKK.

Residues 113–325 enclose the Radical SAM core domain; that stretch reads HRYPDRVLLL…GLRGHTSGYA (213 aa). [4Fe-4S] cluster contacts are provided by cysteine 127, cysteine 131, and cysteine 134. Lysine 339 carries the N6-(pyridoxal phosphate)lysine modification.

The protein belongs to the radical SAM superfamily. KamA family. As to quaternary structure, homotetramer. [4Fe-4S] cluster serves as cofactor. Requires pyridoxal 5'-phosphate as cofactor.

It carries out the reaction L-lysine = (3S)-3,6-diaminohexanoate. It functions in the pathway amino-acid degradation; L-lysine degradation via acetate pathway. Functionally, catalyzes the interconversion of L-alpha-lysine and L-beta-lysine. This chain is L-lysine 2,3-aminomutase, found in Fusobacterium nucleatum subsp. nucleatum (strain ATCC 25586 / DSM 15643 / BCRC 10681 / CIP 101130 / JCM 8532 / KCTC 2640 / LMG 13131 / VPI 4355).